The primary structure comprises 840 residues: Lon protease homolog 2, peroxisomal (840 aa).

Residues 13–222 enclose the Lon N-terminal domain; sequence LPLLCTHDGV…KALPLLTRQI (210 aa). 375-382 is a binding site for ATP; it reads GPPGVGKT. The tract at residues 583 to 606 is disordered; that stretch reads QKVSRSEAPTEQHAEQNTDSKVED. Over residues 584–606 the composition is skewed to basic and acidic residues; that stretch reads KVSRSEAPTEQHAEQNTDSKVED. Residues 641–825 form the Lon proteolytic domain; that stretch reads LTLPGVAIGL…DEVLNAAFDG (185 aa). Catalysis depends on residues serine 731 and lysine 774. Residues 838 to 840 carry the Microbody targeting signal motif; the sequence is SKL.

It belongs to the peptidase S16 family.

Its subcellular location is the peroxisome matrix. It carries out the reaction Hydrolysis of proteins in presence of ATP.. ATP-dependent serine protease that mediates the selective degradation of misfolded and unassembled polypeptides in the peroxisomal matrix. Necessary for type 2 peroxisome targeting signal (PTS2)-containing protein processing and facilitates peroxisome matrix protein import. In Danio rerio (Zebrafish), this protein is Lon protease homolog 2, peroxisomal (lonp2).